The sequence spans 479 residues: Long-chain alcohol oxidase (479 aa).

Positions 14 to 183 (QILRPSAAYT…LAVRIRCREQ (170 aa)) constitute an FAD-binding PCMH-type domain. Histidine 49 bears the Pros-8alpha-FAD histidine mark. Residues threonine 113, glycine 116, 120–123 (TGTH), and isoleucine 173 contribute to the FAD site. Residues 241 to 258 (LYWLGTMDYGLILQILFL) traverse the membrane as a helical segment. Residues arginine 369 and histidine 425 each coordinate FAD.

Belongs to the oxygen-dependent FAD-linked oxidoreductase family. It depends on FAD as a cofactor.

It localises to the cell membrane. It catalyses the reaction a long-chain primary fatty alcohol + O2 = a long-chain fatty aldehyde + H2O2. It carries out the reaction dodecan-1-ol + O2 = dodecanal + H2O2. The enzyme catalyses tetradecan-1-ol + O2 = tetradecanal + H2O2. The catalysed reaction is octan-1-ol + O2 = octanal + H2O2. It catalyses the reaction decan-1-ol + O2 = decanal + H2O2. Its pathway is lipid metabolism; fatty acid metabolism. In vitro catalyzes the oxidation of a range of fatty alcohols having a carbon chain length of six and above, with a reduction of O2 to H2O2. Shows the highest activity with 1-dodecanol. Is likely involved in lipid metabolism. In Uncultured marine euryarchaeote, this protein is Long-chain alcohol oxidase.